Here is a 113-residue protein sequence, read N- to C-terminus: Ranasmurfin (113 aa).

At tyrosine 2 the chain carries 2',4',5'-topaquinone. Positions 2 to 31 (YACSFPPSEIPGSKECLAEALQKHQGFKKK) form a cross-link, lysine tyrosylquinone (Tyr-Lys). 3 disulfide bridges follow: cysteine 4–cysteine 62, cysteine 17–cysteine 65, and cysteine 37–cysteine 101. An Aminomalonic acid (Ser); in chain B modification is found at serine 9. A cross-link (S-cysteinyl 3-(oxidosulfanyl)alanine (Cys-Cys); in chain B) is located at residues 17–65 (CLAEALQKHQGFKKKSYALICAYLNYKEDAENYERAAEDFDSAVKCTGC). Positions 30–108 (KKSYALICAY…SLCTLFQKLY (79 aa)) form a cross-link, lysine tyrosylquinone (Lys-Tyr). At cysteine 65 the chain carries Cysteine sulfenic acid (-SOH); in chain B. Tyrosine 108 bears the 2',4',5'-topaquinone mark. Residues tyrosine 108 and histidine 112 each contribute to the Zn(2+) site. Residue tyrosine 108 forms a 5'-tyrosyl-5'-aminotyrosine (Tyr-Tyr) (interchain with Y-108) linkage.

As to quaternary structure, homodimer. The two chains, designated A and B, differ in their modifications, but not, it is thought, in their sequence. Requires Zn(2+) as cofactor. Foam nest.

The protein resides in the secreted. This chain is Ranasmurfin, found in Polypedates leucomystax (Common tree frog).